The following is a 229-amino-acid chain: Probable methylthioribulose-1-phosphate dehydratase (229 aa).

Cys97 contacts substrate. Residues His115 and His117 each coordinate Zn(2+). The Proton donor/acceptor role is filled by Glu139. His195 lines the Zn(2+) pocket.

This sequence belongs to the aldolase class II family. MtnB subfamily. The cofactor is Zn(2+).

It is found in the cytoplasm. The enzyme catalyses 5-(methylsulfanyl)-D-ribulose 1-phosphate = 5-methylsulfanyl-2,3-dioxopentyl phosphate + H2O. It functions in the pathway amino-acid biosynthesis; L-methionine biosynthesis via salvage pathway; L-methionine from S-methyl-5-thio-alpha-D-ribose 1-phosphate: step 2/6. Functionally, catalyzes the dehydration of methylthioribulose-1-phosphate (MTRu-1-P) into 2,3-diketo-5-methylthiopentyl-1-phosphate (DK-MTP-1-P). This is Probable methylthioribulose-1-phosphate dehydratase from Acyrthosiphon pisum (Pea aphid).